The chain runs to 301 residues: Mycothiol acetyltransferase (301 aa).

N-acetyltransferase domains lie at 6–151 (EWRQ…ILRD) and 153–301 (VSLR…QYGR). Acetyl-CoA is bound at residue 79–81 (LFV). Residues glutamate 180, lysine 219, and glutamate 235 each coordinate 1D-myo-inositol 2-(L-cysteinylamino)-2-deoxy-alpha-D-glucopyranoside. Acetyl-CoA-binding positions include 239–241 (VGV) and 246–252 (QGGGLGR). Tyrosine 273 provides a ligand contact to 1D-myo-inositol 2-(L-cysteinylamino)-2-deoxy-alpha-D-glucopyranoside.

It belongs to the acetyltransferase family. MshD subfamily. As to quaternary structure, monomer.

It catalyses the reaction 1D-myo-inositol 2-(L-cysteinylamino)-2-deoxy-alpha-D-glucopyranoside + acetyl-CoA = mycothiol + CoA + H(+). Its function is as follows. Catalyzes the transfer of acetyl from acetyl-CoA to desacetylmycothiol (Cys-GlcN-Ins) to form mycothiol. The protein is Mycothiol acetyltransferase of Amycolatopsis mediterranei (strain U-32).